The following is a 453-amino-acid chain: Aldehyde dehydrogenase, dimeric NADP-preferring (453 aa).

Ser-2 is modified (N-acetylserine). N6-acetyllysine is present on Lys-178. 188-193 (GSTAVG) is a binding site for NAD(+). Lys-194 carries the post-translational modification N6-acetyllysine. Residues Glu-210 and Cys-244 contribute to the active site.

Belongs to the aldehyde dehydrogenase family. In terms of assembly, homodimer. Constitutively expressed in cornea, stomach, skin, bladder and lungs. Lowest expression levels in lungs and bladder.

Its subcellular location is the cytoplasm. It catalyses the reaction an aldehyde + NAD(+) + H2O = a carboxylate + NADH + 2 H(+). The enzyme catalyses octanal + NAD(+) + H2O = octanoate + NADH + 2 H(+). Functionally, ALDHs play a major role in the detoxification of alcohol-derived acetaldehyde. They are involved in the metabolism of corticosteroids, biogenic amines, neurotransmitters, and lipid peroxidation. Oxidizes medium and long chain aldehydes into non-toxic fatty acids. Preferentially oxidizes aromatic aldehyde substrates. Comprises about 50 percent of corneal epithelial soluble proteins. May play a role in preventing corneal damage caused by ultraviolet light. This Mus musculus (Mouse) protein is Aldehyde dehydrogenase, dimeric NADP-preferring (Aldh3a1).